Reading from the N-terminus, the 231-residue chain is MSLKLPEHVAIIMDGNGRWARQRGLPRVAGHYRGAEVAEDIIEYCIELGIKHLTLFAFSTENWNRPKEEVKALFELMENYIRSKREKLYSLGVRVRLIGRRDRLSRGLVNLMEELESDSKDFKNLFLNVAIDYGGRDDILRAVKKIMEVQPSKLDEETFSQFLDLSCSPDPDLLIRTAGEKRISNFLLWNLAYTELYFTDTLWPDFTREEFMKALEDYSRRKRKFGRVLDE.

D14 is a catalytic residue. D14 contacts Mg(2+). Substrate-binding positions include 15-18 (GNGR), W19, R27, H31, and 59-61 (STE). N62 serves as the catalytic Proton acceptor. Residues W63, R65, R176, and 182-184 (RIS) contribute to the substrate site. E195 provides a ligand contact to Mg(2+).

It belongs to the UPP synthase family. As to quaternary structure, homodimer. Mg(2+) is required as a cofactor.

In terms of biological role, catalyzes the condensation of isopentenyl diphosphate (IPP) with allylic pyrophosphates generating different type of terpenoids. In Aquifex aeolicus (strain VF5), this protein is Isoprenyl transferase.